Reading from the N-terminus, the 438-residue chain is Cell division cycle-associated 7-like protein (438 aa).

The Integrase domain-binding motif 1 (IBM1) motif lies at 9–33 (IPKEVADIFNAPSDDEEFVGFQDDV). Ser-21 carries the phosphoserine modification. The interval 55-114 (ACLHSKYFTEELRRIFKEDTDSDNEDFEGFTESELNIGSNPELIESELSDGDKTHPMMSD) is PSIP1-binding. An Integrase domain-binding motif 2 (IBM2) motif is present at residues 62-88 (FTEELRRIFKEDTDSDNEDFEGFTESE). The tract at residues 72 to 199 (EDTDSDNEDF…ESRAESQETS (128 aa)) is disordered. Residue Thr-74 is modified to Phosphothreonine. Acidic residues predominate over residues 74–85 (TDSDNEDFEGFT). Ser-76 carries the phosphoserine modification. Position 85 is a phosphothreonine (Thr-85). A phosphoserine mark is found at Ser-100, Ser-103, Ser-113, Ser-135, Ser-136, Ser-183, and Ser-185. Residues 113–123 (SDEEDDDDEEE) are compositionally biased toward acidic residues. Positions 166-183 (TDLRREKSCRQPKEKEDS) are enriched in basic and acidic residues. The interval 201–223 (ALLKRAMNIKENKAMLAQLLAEL) is MYC-binding. Glycyl lysine isopeptide (Lys-Gly) (interchain with G-Cter in SUMO2) cross-links involve residues Lys-210 and Lys-213. At Ser-249 the chain carries Phosphoserine.

As to quaternary structure, interacts with MYC. Interacts (via IBM motifs) with PSIP1 (via IBD domain); phosphorylation increases its affinity for PSIP1. Phosphorylation increases its interaction with PSIP1.

It is found in the cytoplasm. Its subcellular location is the nucleus. Its function is as follows. Plays a role in transcriptional regulation as a repressor that inhibits monoamine oxidase A (MAOA) activity and gene expression by binding to the promoter. Plays an important oncogenic role in mediating the full transforming effect of MYC in medulloblastoma cells. Involved in apoptotic signaling pathways; May act downstream of P38-kinase and BCL-2, but upstream of CASP3/caspase-3 as well as CCND1/cyclin D1 and E2F1. The chain is Cell division cycle-associated 7-like protein (Cdca7l) from Rattus norvegicus (Rat).